A 374-amino-acid chain; its full sequence is Alanine racemase (374 aa).

Residue lysine 35 is the Proton acceptor; specific for D-alanine of the active site. Lysine 35 carries the N6-(pyridoxal phosphate)lysine modification. Position 130 (arginine 130) interacts with substrate. The active-site Proton acceptor; specific for L-alanine is tyrosine 253. Residue methionine 305 coordinates substrate.

It belongs to the alanine racemase family. Requires pyridoxal 5'-phosphate as cofactor.

It catalyses the reaction L-alanine = D-alanine. It functions in the pathway amino-acid biosynthesis; D-alanine biosynthesis; D-alanine from L-alanine: step 1/1. Its function is as follows. Catalyzes the interconversion of L-alanine and D-alanine. May also act on other amino acids. The sequence is that of Alanine racemase (alr) from Ralstonia pickettii (strain 12J).